The primary structure comprises 416 residues: MENSKILIRNAAQIVTCHGDKARRGAEMSDLGVIEDGAVAMSDGVITHVGPTEEVLRNIHAEDYLEIRAENQAVLPGFVDSHTHFIFGGYREEEFSWRLRGDSYMSIMERGGGIVNTMKATRESDFDTLWDRGEERLDELFSMGVTTVEGKSGYGLDLQTELVQLRVMSDLNESHPMDVVSTFLGAHAVPPEFAGRTDDYVDYMIEEVLPAIRAEHTVTFCDVFCEKGVFSLEQSERLLRAARHHRFKLKMHADEIVPFGGAELAASLKCVSADHLLHISDTGIKRLARAGVVATLLPLTAFSLNEPYAPARKMIDAGCAVALASDLNPGSCFSASIPMMIALACIYMKMTPEEAVTALTINGAAAVGRASEIGSISVGKRADVILLKYPSYKFLPYHVGMNLVDTVIKDGELYMM.

Fe(3+)-binding residues include His-82 and His-84. Zn(2+)-binding residues include His-82 and His-84. 3 residues coordinate 4-imidazolone-5-propanoate: Arg-91, Tyr-154, and His-187. Tyr-154 serves as a coordination point for N-formimidoyl-L-glutamate. Fe(3+) is bound at residue His-252. Zn(2+) is bound at residue His-252. Glu-255 serves as a coordination point for 4-imidazolone-5-propanoate. Asp-326 contributes to the Fe(3+) binding site. Residue Asp-326 coordinates Zn(2+). The N-formimidoyl-L-glutamate site is built by Asn-328 and Gly-330. A 4-imidazolone-5-propanoate-binding site is contributed by Ser-331.

It belongs to the metallo-dependent hydrolases superfamily. HutI family. It depends on Zn(2+) as a cofactor. Fe(3+) serves as cofactor.

The protein localises to the cytoplasm. It catalyses the reaction 4-imidazolone-5-propanoate + H2O = N-formimidoyl-L-glutamate. It functions in the pathway amino-acid degradation; L-histidine degradation into L-glutamate; N-formimidoyl-L-glutamate from L-histidine: step 3/3. In terms of biological role, catalyzes the hydrolytic cleavage of the carbon-nitrogen bond in imidazolone-5-propanoate to yield N-formimidoyl-L-glutamate. It is the third step in the universal histidine degradation pathway. The sequence is that of Imidazolonepropionase from Parabacteroides distasonis (strain ATCC 8503 / DSM 20701 / CIP 104284 / JCM 5825 / NCTC 11152).